Here is a 537-residue protein sequence, read N- to C-terminus: ATP synthase subunit beta 1 (537 aa).

Position 164 to 171 (164 to 171 (GGAGVGKT)) interacts with ATP. The tract at residues 471–537 (PKQSATEKNS…ESLEEPQNGR (67 aa)) is disordered. Composition is skewed to polar residues over residues 473-498 (QSAT…SPGP) and 507-528 (IPSS…AQNE).

This sequence belongs to the ATPase alpha/beta chains family. F-type ATPases have 2 components, CF(1) - the catalytic core - and CF(0) - the membrane proton channel. CF(1) has five subunits: alpha(3), beta(3), gamma(1), delta(1), epsilon(1). CF(0) has three main subunits: a(1), b(2) and c(9-12). The alpha and beta chains form an alternating ring which encloses part of the gamma chain. CF(1) is attached to CF(0) by a central stalk formed by the gamma and epsilon chains, while a peripheral stalk is formed by the delta and b chains.

Its subcellular location is the cell inner membrane. It catalyses the reaction ATP + H2O + 4 H(+)(in) = ADP + phosphate + 5 H(+)(out). In terms of biological role, produces ATP from ADP in the presence of a proton gradient across the membrane. The catalytic sites are hosted primarily by the beta subunits. This Pseudoalteromonas atlantica (strain T6c / ATCC BAA-1087) protein is ATP synthase subunit beta 1.